Consider the following 245-residue polypeptide: Nicotinamide/nicotinic acid mononucleotide adenylyltransferase 3 (245 aa).

2 residues coordinate NAD(+): S14 and F15. Residues H22 and K56 each coordinate ATP. W90, T93, G134, and D136 together coordinate NAD(+). An ATP-binding site is contributed by K139. Residues L146, W147, R166, and N197 each coordinate NAD(+). 202–205 is an ATP binding site; sequence TYVR.

Belongs to the eukaryotic NMN adenylyltransferase family. As to quaternary structure, homotetramer. It depends on Mg(2+) as a cofactor.

It is found in the mitochondrion. The catalysed reaction is beta-nicotinamide D-ribonucleotide + ATP + H(+) = diphosphate + NAD(+). It carries out the reaction nicotinate beta-D-ribonucleotide + ATP + H(+) = deamido-NAD(+) + diphosphate. The protein operates within cofactor biosynthesis; NAD(+) biosynthesis; NAD(+) from nicotinamide D-ribonucleotide: step 1/1. It participates in cofactor biosynthesis; NAD(+) biosynthesis; deamido-NAD(+) from nicotinate D-ribonucleotide: step 1/1. With respect to regulation, activity is strongly inhibited by galotannin. Inhibited by P1-(adenosine-5')-P4-(nicotinic-acid-riboside-5')-tetraphosphate (Nap4AD). Catalyzes the formation of NAD(+) from nicotinamide mononucleotide (NMN) and ATP. Can also use the deamidated form; nicotinic acid mononucleotide (NaMN) as substrate with the same efficiency. Can use triazofurin monophosphate (TrMP) as substrate. Can also use GTP and ITP as nucleotide donors. Also catalyzes the reverse reaction, i.e. the pyrophosphorolytic cleavage of NAD(+). For the pyrophosphorolytic activity, can use NAD(+), NADH, NaAD, nicotinic acid adenine dinucleotide phosphate (NHD), nicotinamide guanine dinucleotide (NGD) as substrates. Fails to cleave phosphorylated dinucleotides NADP(+), NADPH and NaADP(+). Protects against axonal degeneration following injury. May be involved in the maintenance of axonal integrity. Also functions as a stress-response chaperone protein that prevents toxic aggregation of proteins; this function may be independent of its NAD(+) synthesis activity. This Mus musculus (Mouse) protein is Nicotinamide/nicotinic acid mononucleotide adenylyltransferase 3.